A 399-amino-acid chain; its full sequence is MAKEKFNRTKPHVNIGTIGHVDHGKTTLSAAISAVLSLKGLAEMKDYDNIDNAPEEKERGITIATSHIEYETENRHYAHVDCPGHADYVKNMITGAAQMDGAILVVSAADGPMPQTREHILLSRQVGVPHIVVFLNKQDMVDDQELLELVEMEVRELLSAYEFPGDDTPIIAGSALRALEEAKAGNVGEWGEKVLKLMAEVDAYIPTPERDTEKTFLMPVEDVFSIAGRGTVVTGRIERGVVKVGDEVEIVGIRATQKTTVTGVEMFRKELEKGEAGDNVGVLLRGTKKEEVERGMVLCKPGSITPHKKFEGEIYVLSKEEGGRHTPFFTNYRPQFYVRTTDVTGSITLPEGVEMVMPGDNVKITVELISPVALELGTKFAIREGGRTVGAGVVSNIIE.

Residues 10–209 enclose the tr-type G domain; sequence KPHVNIGTIG…EVDAYIPTPE (200 aa). The interval 19 to 26 is G1; the sequence is GHVDHGKT. GTP is bound at residue 19–26; it reads GHVDHGKT. Threonine 26 contributes to the Mg(2+) binding site. Residues 60-64 are G2; that stretch reads GITIA. A G3 region spans residues 81-84; the sequence is DCPG. Residues 81-85 and 136-139 contribute to the GTP site; these read DCPGH and NKQD. The interval 136-139 is G4; the sequence is NKQD. Residues 174 to 176 form a G5 region; that stretch reads SAL.

This sequence belongs to the TRAFAC class translation factor GTPase superfamily. Classic translation factor GTPase family. EF-Tu/EF-1A subfamily. As to quaternary structure, monomer.

It localises to the cytoplasm. The enzyme catalyses GTP + H2O = GDP + phosphate + H(+). In terms of biological role, GTP hydrolase that promotes the GTP-dependent binding of aminoacyl-tRNA to the A-site of ribosomes during protein biosynthesis. The protein is Elongation factor Tu of Helicobacter pylori (strain G27).